The chain runs to 506 residues: MFTSKSNSVSPSPSLEQADSDALDISTKVQLYGVLWKRPFGRPSAKWSRRFFIIKESFLLYYSESEKKSFETNKYFNIHPKGVIPLGGCLVEPKEEPSMPYAMKISHQDFHGNILLAAESEFEQTQWLEMLQESGKVTWKNAQLGEAMIKSLEAQGLQLAKEKQEYLDKLMEETEELCLQREQREELERLNQVLEAEKQQFEEVVQELRMEQEQIKRELELTARCLKGVEQEKKELRHLTESLQQTLEELSIEKKKTLEMLEENENHLQTLANQSEQPPPSGGLHSNLRQIEEKMQQLLEEKLLAEKRMKENEERSRALEEEREFYSSQSQALQNSLQELTAEKQQAERELKAEVKVRMDLERRLREAEGALRSLEQGLNSKVRNKEKEERMRADVSHLKRFFEECIRNAELEAKMPVIMKNSVYIHKAATRRIKSCRFHRRRSSTSWNDMKPSQSFMTSQLDANNMEELKEVAKRLSRDQRFRESIYHIMATQPGAPSALSRGGK.

The region spanning 28–136 (KVQLYGVLWK…WLEMLQESGK (109 aa)) is the PH domain. Positions 146-391 (EAMIKSLEAQ…KVRNKEKEER (246 aa)) form a coiled coil. Arg-503 bears the Omega-N-methylarginine mark.

It belongs to the PLEKHD1 family.

This chain is Pleckstrin homology domain-containing family D member 1 (PLEKHD1), found in Homo sapiens (Human).